The chain runs to 100 residues: Large ribosomal subunit protein uL23 (100 aa).

Belongs to the universal ribosomal protein uL23 family. In terms of assembly, part of the 50S ribosomal subunit. Contacts protein L29, and trigger factor when it is bound to the ribosome.

In terms of biological role, one of the early assembly proteins it binds 23S rRNA. One of the proteins that surrounds the polypeptide exit tunnel on the outside of the ribosome. Forms the main docking site for trigger factor binding to the ribosome. The polypeptide is Large ribosomal subunit protein uL23 (Photorhabdus laumondii subsp. laumondii (strain DSM 15139 / CIP 105565 / TT01) (Photorhabdus luminescens subsp. laumondii)).